The primary structure comprises 382 residues: S-adenosylmethionine synthase (382 aa).

H16 provides a ligand contact to ATP. Residue D18 participates in Mg(2+) binding. E44 contacts K(+). L-methionine is bound by residues E57 and Q100. A flexible loop region spans residues 100-110; it reads QSPDIAQGVDN. ATP contacts are provided by residues 165–167, 231–232, D240, 246–247, and K267; these read DAK, RF, and RK. An L-methionine-binding site is contributed by D240. K271 lines the L-methionine pocket.

This sequence belongs to the AdoMet synthase family. In terms of assembly, homotetramer; dimer of dimers. The cofactor is Mg(2+). It depends on K(+) as a cofactor.

It is found in the cytoplasm. The catalysed reaction is L-methionine + ATP + H2O = S-adenosyl-L-methionine + phosphate + diphosphate. The protein operates within amino-acid biosynthesis; S-adenosyl-L-methionine biosynthesis; S-adenosyl-L-methionine from L-methionine: step 1/1. Functionally, catalyzes the formation of S-adenosylmethionine (AdoMet) from methionine and ATP. The overall synthetic reaction is composed of two sequential steps, AdoMet formation and the subsequent tripolyphosphate hydrolysis which occurs prior to release of AdoMet from the enzyme. This is S-adenosylmethionine synthase from Legionella pneumophila (strain Paris).